The following is a 240-amino-acid chain: Uridylate kinase (240 aa).

12–15 contributes to the ATP binding site; the sequence is KISG. The segment at 20–25 is involved in allosteric activation by GTP; the sequence is GNQGFG. Gly54 is a UMP binding site. ATP-binding residues include Gly55 and Arg59. UMP-binding positions include Asp74 and 135–142; that span reads TGNPYFST. 2 residues coordinate ATP: Tyr168 and Asp171.

It belongs to the UMP kinase family. In terms of assembly, homohexamer.

It is found in the cytoplasm. It catalyses the reaction UMP + ATP = UDP + ADP. The protein operates within pyrimidine metabolism; CTP biosynthesis via de novo pathway; UDP from UMP (UMPK route): step 1/1. Its activity is regulated as follows. Allosterically activated by GTP. Inhibited by UTP. Functionally, catalyzes the reversible phosphorylation of UMP to UDP. This is Uridylate kinase from Moorella thermoacetica (strain ATCC 39073 / JCM 9320).